The sequence spans 671 residues: Talaropentaene synthase (671 aa).

Mg(2+) is bound at residue D92. The short motif at 92-96 (DDMTD) is the DDXXD 1 element. The short motif at 223 to 231 (NDLYSYEKE) is the NSE/DTE element. Residues K389, R392, and H421 each coordinate isopentenyl diphosphate. Mg(2+) contacts are provided by D428 and D432. The short motif at 428 to 432 (DDIED) is the DDXXD 2 element. A dimethylallyl diphosphate-binding site is contributed by R437. R438 is an isopentenyl diphosphate binding site. Dimethylallyl diphosphate-binding residues include K515, T516, Q551, N558, K568, and K578.

It in the N-terminal section; belongs to the terpene synthase family. The protein in the C-terminal section; belongs to the FPP/GGPP synthase family. Mg(2+) is required as a cofactor.

It catalyses the reaction 5 isopentenyl diphosphate + dimethylallyl diphosphate = all-trans-hexaprenyl diphosphate + 5 diphosphate. The enzyme catalyses all-trans-hexaprenyl diphosphate = talaropentaene + diphosphate. Its function is as follows. Bifunctional terpene synthase that converts dimethylallyl diphosphate (DMAPP) and isopentenyl diphosphate (IPP) into talaropentaene as a single product. The C-terminal prenyltransferase (PT) domain of MpMS catalyzes formation of hexaprenyl diphosphate (HexPP), whereas the N-terminal terpene cyclase (TC) domain catalyzes the cyclization of HexPP to talaropentaene. This chain is Talaropentaene synthase, found in Talaromyces verruculosus (Penicillium verruculosum).